A 360-amino-acid polypeptide reads, in one-letter code: Peptide chain release factor 1 (360 aa).

An N5-methylglutamine modification is found at glutamine 235. Positions glutamine 286–asparagine 311 are disordered.

The protein belongs to the prokaryotic/mitochondrial release factor family. Post-translationally, methylated by PrmC. Methylation increases the termination efficiency of RF1.

It is found in the cytoplasm. In terms of biological role, peptide chain release factor 1 directs the termination of translation in response to the peptide chain termination codons UAG and UAA. The sequence is that of Peptide chain release factor 1 from Histophilus somni (strain 2336) (Haemophilus somnus).